The chain runs to 288 residues: Proteasome assembly chaperone 1 (288 aa).

Residues 1–33 (MATFFGEVQSVFSRAVDEEEEDEDDDEEEEEDR) form a disordered region. Residues 17–33 (DEEEEDEDDDEEEEEDR) show a composition bias toward acidic residues.

It belongs to the PSMG1 family. In terms of assembly, forms a heterodimer with psmg2. In terms of processing, degraded by the proteasome upon completion of 20S proteasome maturation.

Its subcellular location is the cytoplasm. It localises to the endoplasmic reticulum. Chaperone protein which promotes assembly of the 20S proteasome as part of a heterodimer with psmg2. This is Proteasome assembly chaperone 1 from Xenopus laevis (African clawed frog).